The sequence spans 215 residues: FGFR1 oncogene partner 2 homolog (215 aa).

2 coiled-coil regions span residues 5–104 (IEKA…MSKY) and 161–185 (KEQE…ITRE). A disordered region spans residues 194–215 (DASESTSLSALVTNSDLSLRKN). A compositionally biased stretch (polar residues) spans 197-215 (ESTSLSALVTNSDLSLRKN).

Belongs to the SIKE family.

The protein resides in the cytoplasm. Its function is as follows. May be involved in wound healing pathway. In Pongo abelii (Sumatran orangutan), this protein is FGFR1 oncogene partner 2 homolog (FGFR1OP2).